We begin with the raw amino-acid sequence, 241 residues long: Major microneme antigen (241 aa).

Positions 1 to 34 are cleaved as a signal peptide; sequence MTLPIHFPRCVLYGMASAVWSILFLHILVGDTMS. A propeptide spanning residues 35–103 is cleaved from the precursor; sequence AADALSWSGG…ATGRGPSFVH (69 aa). Residues 64–83 are compositionally biased toward basic and acidic residues; sequence GKELEQQHGGEEQQMQRDTK. A disordered region spans residues 64–90; that stretch reads GKELEQQHGGEEQQMQRDTKPAAFSNP. PAN domains follow at residues 112–181 and 185–241; these read CFPH…PRSC and CTDN…VERA. 6 disulfides stabilise this stretch: cysteine 112–cysteine 181, cysteine 137–cysteine 159, cysteine 141–cysteine 147, cysteine 185–cysteine 189, cysteine 210–cysteine 230, and cysteine 214–cysteine 220. Residue serine 121 coordinates a carbohydrate. 3 residues coordinate a carbohydrate: lysine 162, tyrosine 169, and aspartate 174.

This sequence belongs to the microneme antigen family. In terms of assembly, homodimer or heterodimer of major microneme antigen and microneme antigen. Contains six disulfide bonds.

The protein resides in the cytoplasmic vesicle. It localises to the secretory vesicle. The protein localises to the microneme. Functionally, galactose-binding lectin. Plays a role in adhesion to the host cell. Has a potential role in invasion of host cells. The protein is Major microneme antigen of Sarcocystis muris.